An 88-amino-acid polypeptide reads, in one-letter code: Co-chaperonin GroES (88 aa).

Belongs to the GroES chaperonin family. As to quaternary structure, heptamer of 7 subunits arranged in a ring. Interacts with the chaperonin GroEL.

The protein localises to the cytoplasm. In terms of biological role, together with the chaperonin GroEL, plays an essential role in assisting protein folding. The GroEL-GroES system forms a nano-cage that allows encapsulation of the non-native substrate proteins and provides a physical environment optimized to promote and accelerate protein folding. GroES binds to the apical surface of the GroEL ring, thereby capping the opening of the GroEL channel. This is Co-chaperonin GroES from Treponema denticola (strain ATCC 35405 / DSM 14222 / CIP 103919 / JCM 8153 / KCTC 15104).